We begin with the raw amino-acid sequence, 356 residues long: Dual-specificity RNA methyltransferase RlmN (356 aa).

The Proton acceptor role is filled by Glu92. Residues 98–327 enclose the Radical SAM core domain; the sequence is EKNRGTLCIS…HQGIRTMTRR (230 aa). Cysteines 105 and 337 form a disulfide. The [4Fe-4S] cluster site is built by Cys112, Cys116, and Cys119. S-adenosyl-L-methionine-binding positions include 162–163, Ser194, 216–218, and Asn294; these read GE and SLH. Catalysis depends on Cys337, which acts as the S-methylcysteine intermediate.

It belongs to the radical SAM superfamily. RlmN family. The cofactor is [4Fe-4S] cluster.

The protein resides in the cytoplasm. The enzyme catalyses adenosine(2503) in 23S rRNA + 2 reduced [2Fe-2S]-[ferredoxin] + 2 S-adenosyl-L-methionine = 2-methyladenosine(2503) in 23S rRNA + 5'-deoxyadenosine + L-methionine + 2 oxidized [2Fe-2S]-[ferredoxin] + S-adenosyl-L-homocysteine. The catalysed reaction is adenosine(37) in tRNA + 2 reduced [2Fe-2S]-[ferredoxin] + 2 S-adenosyl-L-methionine = 2-methyladenosine(37) in tRNA + 5'-deoxyadenosine + L-methionine + 2 oxidized [2Fe-2S]-[ferredoxin] + S-adenosyl-L-homocysteine. Specifically methylates position 2 of adenine 2503 in 23S rRNA and position 2 of adenine 37 in tRNAs. m2A2503 modification seems to play a crucial role in the proofreading step occurring at the peptidyl transferase center and thus would serve to optimize ribosomal fidelity. The chain is Dual-specificity RNA methyltransferase RlmN from Ruthia magnifica subsp. Calyptogena magnifica.